Here is a 299-residue protein sequence, read N- to C-terminus: Protein FAM228A (299 aa).

Residues 135-201 (AKGTSYQHGR…GRNRYKGASS (67 aa)) form a disordered region. Positions 146 to 159 (KTHDTQKEAKETEK) are enriched in basic and acidic residues. Phosphoserine is present on S264.

This sequence belongs to the FAM228 family.

The chain is Protein FAM228A (Fam228a) from Mus musculus (Mouse).